We begin with the raw amino-acid sequence, 591 residues long: Aspartate--tRNA(Asp/Asn) ligase (591 aa).

Position 174 (E174) interacts with L-aspartate. An aspartate region spans residues 198–201 (QLFK). L-aspartate is bound at residue R220. ATP-binding positions include 220 to 222 (RDE) and Q229. H450 provides a ligand contact to L-aspartate. ATP is bound at residue E483. Residue R490 participates in L-aspartate binding. 535–538 (GLDR) contacts ATP.

It belongs to the class-II aminoacyl-tRNA synthetase family. Type 1 subfamily. Homodimer.

It is found in the cytoplasm. It carries out the reaction tRNA(Asx) + L-aspartate + ATP = L-aspartyl-tRNA(Asx) + AMP + diphosphate. Functionally, aspartyl-tRNA synthetase with relaxed tRNA specificity since it is able to aspartylate not only its cognate tRNA(Asp) but also tRNA(Asn). Reaction proceeds in two steps: L-aspartate is first activated by ATP to form Asp-AMP and then transferred to the acceptor end of tRNA(Asp/Asn). The chain is Aspartate--tRNA(Asp/Asn) ligase from Pseudomonas putida (strain GB-1).